Consider the following 299-residue polypeptide: F-actin-capping protein subunit alpha-3 (299 aa).

Residue serine 290 is modified to Phosphoserine.

The protein belongs to the F-actin-capping protein alpha subunit family. Component of the F-actin capping complex, composed of a heterodimer of an alpha and a beta subunit. Component of the WASH complex, composed of F-actin-capping protein subunit alpha (CAPZA1, CAPZA2 or CAPZA3), F-actin-capping protein subunit beta (CAPZB), WASHC1, WASHC2, WASHC3, WASHC4 and WASHC5.

Its function is as follows. F-actin-capping proteins bind in a Ca(2+)-independent manner to the fast growing ends of actin filaments (barbed end) thereby blocking the exchange of subunits at these ends. Unlike other capping proteins (such as gelsolin and severin), these proteins do not sever actin filaments. May play a role in the morphogenesis of spermatid. The sequence is that of F-actin-capping protein subunit alpha-3 (CAPZA3) from Macaca fascicularis (Crab-eating macaque).